Consider the following 103-residue polypeptide: Large ribosomal subunit protein bL21 (103 aa).

Belongs to the bacterial ribosomal protein bL21 family. In terms of assembly, part of the 50S ribosomal subunit. Contacts protein L20.

In terms of biological role, this protein binds to 23S rRNA in the presence of protein L20. This is Large ribosomal subunit protein bL21 from Beijerinckia indica subsp. indica (strain ATCC 9039 / DSM 1715 / NCIMB 8712).